The sequence spans 184 residues: ATP synthase subunit b, chloroplastic (184 aa).

A helical transmembrane segment spans residues 27-49; it reads LATNPINLSVVLGVLIFFGKGVL.

The protein belongs to the ATPase B chain family. F-type ATPases have 2 components, F(1) - the catalytic core - and F(0) - the membrane proton channel. F(1) has five subunits: alpha(3), beta(3), gamma(1), delta(1), epsilon(1). F(0) has four main subunits: a(1), b(1), b'(1) and c(10-14). The alpha and beta chains form an alternating ring which encloses part of the gamma chain. F(1) is attached to F(0) by a central stalk formed by the gamma and epsilon chains, while a peripheral stalk is formed by the delta, b and b' chains.

The protein resides in the plastid. It is found in the chloroplast thylakoid membrane. F(1)F(0) ATP synthase produces ATP from ADP in the presence of a proton or sodium gradient. F-type ATPases consist of two structural domains, F(1) containing the extramembraneous catalytic core and F(0) containing the membrane proton channel, linked together by a central stalk and a peripheral stalk. During catalysis, ATP synthesis in the catalytic domain of F(1) is coupled via a rotary mechanism of the central stalk subunits to proton translocation. In terms of biological role, component of the F(0) channel, it forms part of the peripheral stalk, linking F(1) to F(0). The sequence is that of ATP synthase subunit b, chloroplastic from Ceratophyllum demersum (Rigid hornwort).